Reading from the N-terminus, the 21-residue chain is Bombinin-H1/H3 (21 aa).

Isoleucine 2 bears the D-allo-isoleucine; in form H3 mark. Isoleucine 20 bears the Isoleucine amide mark.

Belongs to the bombinin family. In terms of tissue distribution, expressed by the skin glands.

The protein localises to the secreted. In terms of biological role, has antimicrobial and hemolytic activities. The chain is Bombinin-H1/H3 from Bombina variegata (Yellow-bellied toad).